A 247-amino-acid chain; its full sequence is 5-oxoprolinase subunit A (247 aa).

Belongs to the LamB/PxpA family. Forms a complex composed of PxpA, PxpB and PxpC.

It catalyses the reaction 5-oxo-L-proline + ATP + 2 H2O = L-glutamate + ADP + phosphate + H(+). Its function is as follows. Catalyzes the cleavage of 5-oxoproline to form L-glutamate coupled to the hydrolysis of ATP to ADP and inorganic phosphate. In Histophilus somni (strain 129Pt) (Haemophilus somnus), this protein is 5-oxoprolinase subunit A.